The sequence spans 964 residues: Cycloisomaltooligosaccharide glucanotransferase (964 aa).

The signal sequence occupies residues 1–30 (MRVKILPLVFMTLLLIVPSQMLLPSGQANA). 2 CBM6 domains span residues 413-538 (DRYE…LTLG) and 740-863 (NMYE…LKLD).

This sequence belongs to the glycosyl hydrolase 66 family.

It catalyses the reaction cyclizes part of a (1-&gt;6)-alpha-D-glucan chain by formation of a (1-&gt;6)-alpha-D-glucosidic bond.. Its function is as follows. Produces cycloisomaltooligosaccharide from dextran. This is Cycloisomaltooligosaccharide glucanotransferase (cit) from Niallia circulans (Bacillus circulans).